A 574-amino-acid chain; its full sequence is uncharacterized protein (574 aa).

11 consecutive transmembrane segments (helical) span residues 14–34 (FFPT…LFFG), 54–74 (VVPL…LGIV), 124–144 (WLMA…SDTA), 205–225 (ICKC…TGTI), 253–273 (SWMA…WFIV), 323–343 (LVIF…VIPG), 350–370 (KGYV…FIWP), 403–423 (FPWS…AVRV), 441–461 (MPFF…TEFS), 485–505 (PLYF…LPMA), and 520–540 (MIDM…ITAI). N-linked (GlcNAc...) asparagine glycosylation is found at Asn-565 and Asn-569.

It belongs to the SLC13A/DASS transporter (TC 2.A.47) family. NADC subfamily.

It localises to the membrane. This is an uncharacterized protein from Caenorhabditis elegans.